The chain runs to 1479 residues: MAERANLVFHNKEIDGTGMKRLISRLIDHFGMGYTSHILDQLKTLGFHQATTTSISLGIEDLLTIPSKGWLVQDAEQQSFLLEKHYYYGAVHAVEKLRQSVEIWYATSEYLKQEMNSNFRITDPSNPVYLMSFSGARGNASQVHQLVGMRGLMSDPQGQMIDLPIQSNLREGLSLTEYIISCYGARKGVVDTAVRTADAGYLTRRLVEVVQHIIVRRRDCGTIRGISVSPQNGMTEKLFVQTLIGRVLADDIYIGSRCIAARNQDIGIGLVNRFITAFRAQPFRAQPIYIRTPFTCRSTSWICQLCYGRSPTHSDLVELGEAVGIIAGQSIGEPGTQLTLRTFHTGGVFTGGTADLVRSPSNGKIKFNENLVHPTRTRHGQPAFLCYIDLHVTIQSQDILYSVNIPSKSLILVQNDQYVKSEQVIAEIRAGTSTLHFKERVQKHIYSESDGEMHWSTDVYHAPEYQYGNLRRLPKTSHLWILSVSMCRSSIASFSLHKDQDQMNTYGKKDREILDYSTSDRIMSNGHWNFIYPSIFQDNSDLLAKKRRNRFVIPLQYHQEQEKELISCFGISIEIPLMGVLRRNTIFAYFDDPRYRKDKKGSGIVKFRYRTLEEEYRTRAEDSEEEYETLEDEYRTREDEYEYETLEESKYGILEDEYEYETLEDEYGSPENEYGNPENEYRTLEKDSEEEYGSPESKYRTQEDEYGTIEEDSEDEYGSPGESAEEKYGTLEEDSEEDSEDEYESPEEDSILKKEGLIEHRGTKEFSLKYQKEVDRFFFILQELHILPRSSSLKILDNSIIGVDTQLTKNTRSRLGGLVRVKRKKSHTELKIFSGDIHFPEEADKILGGCLIPPERQKKDSKESKKRKNWVYVQRKKILKSKEKYFVSVRPTVAYEMDEGRNLATLFPQDLLQEENNLQIRLVNFISHENSKLTQRIYHTNSQFVRTCLVVNWEQEEKEKAGASLVEVRANDLIRDFLRIELVKSTISYTRKRYDRTSAGPIPHNRLDRANINSFYSKAKIESLSQHPEAIGTLLNRNKEYHSLMILSASNCSRIGLFKNSKHPNAIKEWNPRIPIREIFGPLGAIVASISHFSSSYYLLTHNKILLKKYLFVDNLKQTFQVLQELKYSLIDENKRISNFDSNIMLDPFLLNCHFVHHDSWEETLAIIHLGQFICENVCLFKSHIKKSGQIFIVNMNSFVIRAAKPYLATTGATVNGHYGEILYKGDRLVTFIYEKSRSSDITQGLPKVEQIFEARSIDSLSPNLERRIEDWNERIPRILGVPWGFLIGAELTIAQSRISLVNKIQKVYRSQGVQIHNRHIEIIIRQVTSKVRVSEDGMSNVFSPGELIGLLRAERAGRALDESIYYRAILLGITRASLNTQSFISEASFQETARVLAKAALRGRIDWLKGLKENVVLGGIIPVGTGFQKFVHRSPQDKNLYFEIKKKNLFASEMRDFLFLHTELVSSDSDVTNNFYET.

Residues Cys220, Cys296, Cys303, and Cys306 each contribute to the Zn(2+) site. Disordered stretches follow at residues 618-640 (TRAEDSEEEYETLEDEYRTREDE) and 663-756 (LEDE…KKEG). Composition is skewed to acidic residues over residues 622-631 (DSEEEYETLE), 704-717 (DEYGTIEEDSEDEY), and 731-749 (LEEDSEEDSEDEYESPEED).

This sequence belongs to the RNA polymerase beta' chain family. RpoC2 subfamily. In terms of assembly, in plastids the minimal PEP RNA polymerase catalytic core is composed of four subunits: alpha, beta, beta', and beta''. When a (nuclear-encoded) sigma factor is associated with the core the holoenzyme is formed, which can initiate transcription. Zn(2+) serves as cofactor.

It localises to the plastid. The protein resides in the chloroplast. The catalysed reaction is RNA(n) + a ribonucleoside 5'-triphosphate = RNA(n+1) + diphosphate. Its function is as follows. DNA-dependent RNA polymerase catalyzes the transcription of DNA into RNA using the four ribonucleoside triphosphates as substrates. The chain is DNA-directed RNA polymerase subunit beta'' from Triticum aestivum (Wheat).